The primary structure comprises 188 residues: dCTP deaminase (188 aa).

Residues 111–116 (KSTYAR), 135–137 (TLE), Q156, Y170, and Q180 each bind dCTP. E137 functions as the Proton donor/acceptor in the catalytic mechanism.

It belongs to the dCTP deaminase family. As to quaternary structure, homotrimer.

It carries out the reaction dCTP + H2O + H(+) = dUTP + NH4(+). Its pathway is pyrimidine metabolism; dUMP biosynthesis; dUMP from dCTP (dUTP route): step 1/2. In terms of biological role, catalyzes the deamination of dCTP to dUTP. The sequence is that of dCTP deaminase from Coxiella burnetii (strain CbuK_Q154) (Coxiella burnetii (strain Q154)).